A 25-amino-acid chain; its full sequence is Galactose-binding lectin-2 (25 aa).

In terms of assembly, homodimer. Post-translationally, N-glycosylated.

Its function is as follows. D-galactose specific lectin. Binds in decreasing order of affinity: melibiose, N-acetyllactosamine, D-galacturonic acid, D-galactose, methyl-alpha-D-galactoside, D-galactose, methyl-alpha-D-galactopyranoside, methyl-beta-D-galactopyranoside and lactose. Binds also the glycoproteins globotriose, asialofetuin and mucin. Possesses glycan-dependent cytotoxic activity against Burkitt's lymphoma Raji cells and erythroleukemia K562 cells. Has calcium-independent hemagglutinating activity towards human erythrocytes. This is Galactose-binding lectin-2 from Aplysia kurodai (Kuroda's sea hare).